Reading from the N-terminus, the 544-residue chain is Zinc finger and BTB domain-containing protein 7B (544 aa).

The BTB domain occupies 34 to 115 (CDLTIRTQGL…AYTATLTTSS (82 aa)). Ser150 is modified (phosphoserine). Disordered stretches follow at residues 171–221 (TTAS…ARAN) and 244–314 (GRLG…EDPI). Residues 186–200 (PQVPLLPPPPPPPRP) show a composition bias toward pro residues. A compositionally biased stretch (basic residues) spans 201-210 (VARRSRKPRK). N6-acetyllysine; by EP300; alternate occurs at positions 210 and 216. Residues Lys210 and Lys216 each participate in a glycyl lysine isopeptide (Lys-Gly) (interchain with G-Cter in ubiquitin); alternate cross-link. The span at 277–286 (FEGEEEEEEM) shows a compositional bias: acidic residues. Position 339 is an N6-acetyllysine; by EP300; alternate (Lys339). Residue Lys339 forms a Glycyl lysine isopeptide (Lys-Gly) (interchain with G-Cter in ubiquitin); alternate linkage. A required for interaction with and acetylation by EP300 region spans residues 348–404 (MPQECPVCHKIIHGAGKLPRHMRTHTGEKPFACEVCGVRFTRNDKLKIHMRKHTGER). A C2H2-type 1 zinc finger spans residues 350-372 (QECPVCHKIIHGAGKLPRHMRTH). Thr373 carries the phosphothreonine modification. C2H2-type zinc fingers lie at residues 378 to 400 (FACEVCGVRFTRNDKLKIHMRKH) and 406 to 428 (YSCPHCPARFLHSYDLKNHMHLH). The segment at 434-458 (YECHLCHKAFAKEDHLQRHLKGQNC) adopts a C2H2-type 4; atypical zinc-finger fold. Disordered regions lie at residues 465–493 (RRRKDDVAAPHYPPPSTTTSSPAGLDLSN) and 507–544 (WEQSATTGPPVTTQGPPEEEEEEGTPTTPQAEGAMESS). 2 stretches are compositionally biased toward low complexity: residues 511-522 (ATTGPPVTTQGP) and 531-544 (TPTTPQAEGAMESS).

As to quaternary structure, homodimerizes. Interacts with NCL, NEDD4 and YBX1. Interacts with HNRNPU (via RNA-binding RGG-box region); the interaction facilitates the recruitment of long non-coding RNA Blnc1 by ZBTB7B. Interacts with HDAC4 and HDAC5; the interaction allows the recruitment of HDAC4 and HDAC5 on CD8 loci for deacetylation and possible inhibition of CD8 genes expression. In terms of processing, acetylated directly and specifically by EP300. EP300-mediated acetylation of Lys-210, Lys-216 and Lys-339 stabilizes the protein by antagonizing ubiquitin conjugation. Ubiquitinated, leading to proteasomal degradation. Competes with acetylation on Lys-210, Lys-216 and Lys-339. Widely expressed, with a higher level in skin. Expressed in thymus. Restricted to CD4 cells (mature single positive CD4(+) and intermediate CD4(+)CD8(+) cells). Expressed in the luminal epithelial cells in the mammary glands where is up-regulated at late pregnancy and lactation. Expression is enriched in brown fat.

Its subcellular location is the nucleus. Transcription regulator that acts as a key regulator of lineage commitment of immature T-cell precursors. Exerts distinct biological functions in the mammary epithelial cells and T cells in a tissue-specific manner. Necessary and sufficient for commitment of CD4 lineage, while its absence causes CD8 commitment. Development of immature T-cell precursors (thymocytes) to either the CD4 helper or CD8 killer T-cell lineages correlates precisely with their T-cell receptor specificity for major histocompatibility complex class II or class I molecules, respectively. Cross-antagonism between ZBTB7B and CBF complexes are determinative to CD4 versus CD8 cell fate decision. Suppresses RUNX3 expression and imposes CD4+ lineage fate by inducing the SOCS suppressors of cytokine signaling. induces, as a transcriptional activator, SOCS genes expression which represses RUNX3 expression and promotes the CD4+ lineage fate. During CD4 lineage commitment, associates with multiple sites at the CD8 locus, acting as a negative regulator of the CD8 promoter and enhancers by epigenetic silencing through the recruitment of class II histone deacetylases, such as HDAC4 and HDAC5, to these loci. Regulates the development of IL17-producing CD1d-restricted naural killer (NK) T cells. Also functions as an important metabolic regulator in the lactating mammary glands. Critical feed-forward regulator of insulin signaling in mammary gland lactation, directly regulates expression of insulin receptor substrate-1 (IRS-1) and insulin-induced Akt-mTOR-SREBP signaling. Transcriptional repressor of the collagen COL1A1 and COL1A2 genes. May also function as a repressor of fibronectin and possibly other extracellular matrix genes. Potent driver of brown fat development, thermogenesis and cold-induced beige fat formation. Recruits the brown fat lncRNA 1 (Blnc1):HNRNPU ribonucleoprotein complex to activate thermogenic gene expression in brown and beige adipocytes. This is Zinc finger and BTB domain-containing protein 7B from Mus musculus (Mouse).